Here is a 119-residue protein sequence, read N- to C-terminus: Ribonuclease P protein component (119 aa).

Belongs to the RnpA family. Consists of a catalytic RNA component (M1 or rnpB) and a protein subunit.

It catalyses the reaction Endonucleolytic cleavage of RNA, removing 5'-extranucleotides from tRNA precursor.. Functionally, RNaseP catalyzes the removal of the 5'-leader sequence from pre-tRNA to produce the mature 5'-terminus. It can also cleave other RNA substrates such as 4.5S RNA. The protein component plays an auxiliary but essential role in vivo by binding to the 5'-leader sequence and broadening the substrate specificity of the ribozyme. This is Ribonuclease P protein component from Bifidobacterium longum (strain DJO10A).